The following is a 1745-amino-acid chain: Tight junction protein 1 (1745 aa).

In terms of domain architecture, PDZ 1 spans 23 to 110; that stretch reads TVTLHRAPGF…NAKITIRRKK (88 aa). Basic residues predominate over residues 102–112; sequence AKITIRRKKKV. The segment at 102–189 is disordered; sequence AKITIRRKKK…QPAKPTKVTL (88 aa). A compositionally biased stretch (acidic residues) spans 123–136; sequence PVSDNEDDSYDEEV. Ser-125 bears the Phosphoserine mark. The residue at position 132 (Tyr-132) is a Phosphotyrosine. Residues 149-175 are compositionally biased toward basic and acidic residues; that stretch reads RRSEKSWARDRSASRERSLSPRSDRRS. Phosphoserine occurs at positions 175, 178, and 179. The residue at position 185 (Thr-185) is a Phosphothreonine. Residues 186 to 264 enclose the PDZ 2 domain; that stretch reads KVTLVKSRKN…KLKMVVQRDE (79 aa). Ser-212 and Ser-241 each carry phosphoserine. At Thr-267 the chain carries Phosphothreonine. Phosphoserine is present on residues Ser-275, Ser-277, Ser-280, Ser-284, Ser-290, Ser-294, Ser-297, Ser-300, Ser-323, Ser-329, Ser-334, Ser-337, and Ser-353. A disordered region spans residues 296–364; sequence ASDHSGRSHD…PVKHVDDHPP (69 aa). Residues 299–308 show a composition bias toward basic and acidic residues; sequence HSGRSHDRPP. The span at 325–338 shows a compositional bias: polar residues; that stretch reads HSTQSPQQPSNGSL. Thr-354 is subject to Phosphothreonine. The PDZ 3 domain maps to 421–502; the sequence is SMKLVKFRKG…GEEVTILAQK (82 aa). Positions 516 to 584 constitute an SH3 domain; it reads GDSFYIRTHF…PNKNRAEQLA (69 aa). In terms of domain architecture, Guanylate kinase-like spans 610–791; it reads SKRNLRKSRE…WYGALKEAIQ (182 aa). A phosphoserine mark is found at Ser-617 and Ser-622. An occludin (OCLN)-binding region region spans residues 633–876; it reads YERVVLREAG…GTPPESAITR (244 aa). Thr-809 carries the post-translational modification Phosphothreonine. Residues Ser-810 and Ser-821 each carry the phosphoserine modification. At Tyr-822 the chain carries Phosphotyrosine. Residues Ser-824, Ser-828, and Ser-837 each carry the phosphoserine modification. Disordered stretches follow at residues 825 to 944 and 956 to 1042; these read APGS…SASA and LEEP…YEPQ. Phosphothreonine is present on residues Thr-846, Thr-848, Thr-854, Thr-861, and Thr-868. The span at 879-892 shows a compositional bias: basic and acidic residues; the sequence is EPVREDSSGMHHEN. Residues 893-906 are compositionally biased toward low complexity; it reads QTYPPYSPQAQPQA. Ser-912 carries the post-translational modification Phosphoserine. Positions 998–1014 are enriched in basic and acidic residues; that stretch reads DPAKVYRKEPYSEEMMR. Residue Ser-1071 is modified to Phosphoserine. The tract at residues 1090–1586 is disordered; it reads QWSYYDDKQP…STQPPEFDSG (497 aa). Basic and acidic residues predominate over residues 1106–1124; sequence ENQHPRDLDSRQHPEEASE. At Ser-1138 the chain carries Phosphoserine. A phosphotyrosine mark is found at Tyr-1139 and Tyr-1164. The interval 1150 to 1370 is actin-binding region (ABR); it reads RTSTLRHEEQ…FDRRSFESKP (221 aa). Basic and acidic residues-rich tracts occupy residues 1268–1285 and 1335–1346; these read KMFE…KDVN and PPEDIVRSNHYD. A Phosphotyrosine modification is found at Tyr-1353. Ser-1365 carries the post-translational modification Phosphoserine. The span at 1388 to 1399 shows a compositional bias: low complexity; it reads SQSQPNFSSYSS. Positions 1401–1418 are enriched in basic and acidic residues; it reads GKPETDAVDRSFSEKRYD. Position 1411 is a phosphoserine (Ser-1411). Residues 1431–1445 are compositionally biased toward low complexity; that stretch reads SQYSQPAPPLSSSSL. 2 stretches are compositionally biased toward polar residues: residues 1455 to 1468 and 1510 to 1519; these read EGNS…NSYM and AEQTQKTITP. Positions 1535–1544 are enriched in basic and acidic residues; the sequence is PFERKFESPK. A Phosphoserine modification is found at Ser-1542. The span at 1561 to 1580 shows a compositional bias: polar residues; the sequence is SSKTPTSPKTLMKAHSSTQP. The residue at position 1614 (Ser-1614) is a Phosphoserine. One can recognise a ZU5 domain in the interval 1631-1745; sequence ATARGIFNSN…NCVSVLIDHF (115 aa).

It belongs to the MAGUK family. Homodimer. Forms heterodimers TJP3. Forms a heterodimer (via PDZ2 domain) with TJP2/ZO2 (via PDZ2 domain). Interacts with OCLN, CALM, claudins, CGN/cingulin, CXADR, GJD3 and UBN1. Interacts (via ZU5 domain) with CDC42BPB. Interacts (via PDZ domain) with GJA1. Interacts (via PDZ domains) with ANKRD2. Interacts with POPDC1 (via the C-terminus cytoplasmic tail). Interacts with GJA12 and KIRREL1. Interacts with HSPA4. Interacts (via ZU5 domain) with MYZAP. Interacts with DLL1. Interacts with USP53 (via the C-terminal region). Interacts with DNMBP (via C-terminal domain); required for the apical cell-cell junction localization of DNMBP. Interacts with SPEF1. Interacts (via N-terminus) with CTNNA1. Interacts with CLDN18. Interacts with CLDN16 (via TRV motif); this is a prerequisite for anchoring of CLDN16 at the tight junction. Interacts with PKP1; the interaction facilitates TJP1/ZO-1 localization to the plasma membrane. Interacts with PATJ (via PDZ1-6 domains); the interaction is required for attachment and extension of TJP1/ZO1 condensates along the apical cell interface. Post-translationally, phosphorylated at tyrosine redidues in response to epidermal growth factor (EGF). This response is dependent on an intact actin microfilament system. Dephosphorylated by PTPRJ. As to expression, expressed between ameloblasts, at ameloblast-ameloblast junctions and in the stratum intermedium during pre-secretory and secretory stages of tooth development (at protein level).

The protein localises to the cell membrane. It is found in the cell junction. The protein resides in the tight junction. Its subcellular location is the gap junction. It localises to the cytoplasm. The protein localises to the myofibril. It is found in the sarcomere. The protein resides in the i band. Its function is as follows. Tjp1, TjpP2, and Tjp3 are closely related scaffolding proteins that link tight junction (TJ) transmembrane proteins such as claudins, junctional adhesion molecules, and occludin to the actin cytoskeleton. Forms a multistranded TJP1/ZO1 condensate which elongates to form a tight junction belt, the belt is anchored at the apical cell membrane via interaction with PATJ. The tight junction acts to limit movement of substances through the paracellular space and as a boundary between the compositionally distinct apical and basolateral plasma membrane domains of epithelial and endothelial cells. Necessary for lumenogenesis, and particularly efficient epithelial polarization and barrier formation. Plays a role in the regulation of cell migration by targeting Cdc42bpb to the leading edge of migrating cells. Plays an important role in podosome formation and associated function, thus regulating cell adhesion and matrix remodeling. With Tjp2 and TJjp3, participates in the junctional retention and stability of the transcription factor Dbpa, but is not involved in its shuttling to the nucleus. May play a role in mediating cell morphology changes during ameloblast differentiation via its role in tight junctions. This Mus musculus (Mouse) protein is Tight junction protein 1.